Here is a 152-residue protein sequence, read N- to C-terminus: Glutaredoxin-related protein 5, mitochondrial (152 aa).

Residues 1–31 (MSASLSRAAAALLRWGRSAGGGGLPGAGVRA) constitute a mitochondrion transit peptide. Residues 38–141 (AEQLDALVKK…EELKKLGIRS (104 aa)) enclose the Glutaredoxin domain. Residue lysine 55 participates in glutathione binding. Lysine 55 is subject to N6-succinyllysine. Cysteine 63 serves as a coordination point for [2Fe-2S] cluster. Glutathione is bound by residues 93–97 (RQGIK), isoleucine 105, and 118–119 (CD). The residue at position 151 (serine 151) is a Phosphoserine.

It belongs to the glutaredoxin family. Monothiol subfamily. Homodimer. Interacts with ISCU. Interacts with BOLA1. As to expression, detected in bone, liver, muscle and kidney.

The protein resides in the mitochondrion matrix. In terms of biological role, monothiol glutaredoxin involved in mitochondrial iron-sulfur (Fe/S) cluster transfer. Receives 2Fe/2S clusters from scaffold protein ISCU and mediates their transfer to apoproteins, to the 4Fe/FS cluster biosynthesis machinery, or export from mitochondrion. Required for normal regulation of hemoglobin synthesis by the iron-sulfur protein ACO1. This is Glutaredoxin-related protein 5, mitochondrial (Glrx5) from Mus musculus (Mouse).